An 819-amino-acid polypeptide reads, in one-letter code: Protein kinase C-binding protein NELL2 (819 aa).

The N-terminal stretch at 1-24 (MHAMESRVLLRTFCVILGLGAVWG) is a signal peptide. Residues N56, N228, N296, and N301 are each glycosylated (N-linked (GlcNAc...) asparagine). Residues 67-231 (PRSIKASTAT…AQCPDLNRTC (165 aa)) enclose the Laminin G-like domain. Residues 275–334 (RTCTVKGTTYRESESWTDGCKNCTCLNGTIQCETLVCPAPDCPPKSAPAYVDGKCCKECK) enclose the VWFC 1 domain. An EGF-like 1 domain is found at 400–442 (GYDFCSEKHTCMENSVCRNLNDRAVCSCRDGFRALREDNAYCE). Cystine bridges form between C404–C416, C410–C425, and C427–C441. Ca(2+) is bound by residues D443, I444, and E446. The 42-residue stretch at 443-484 (DIDECAEGRHYCRENTMCVNTPGSFMCICKTGYIRIDDYSCT) folds into the EGF-like 2; calcium-binding domain. 9 disulfide bridges follow: C447-C460, C454-C469, C471-C483, C489-C502, C496-C511, C513-C524, C528-C538, C532-C544, and C546-C555. Positions 462, 463, and 466 each coordinate Ca(2+). In terms of domain architecture, EGF-like 3; calcium-binding spans 485-525 (EHDECLTNQHNCDENALCFNTVGGHNCVCKPGYTGNGTTCK). N520 carries N-linked (GlcNAc...) asparagine glycosylation. Residues 526–556 (AFCKDGCRNGGACIAANVCACPQGFTGPSCE) form the EGF-like 4 domain. O-linked (GlcNAc...) threonine glycosylation is present at T551. Residues D558, I559, and E561 each coordinate Ca(2+). The 47-residue stretch at 558-604 (DIDECSEGFVQCDSRANCINLPGWYHCECRDGYHDNGMFAPGGESCE) folds into the EGF-like 5; calcium-binding domain. Disulfide bonds link C562/C575, C569/C584, and C586/C603. Ca(2+) contacts are provided by N577, L578, and W581. Residues D605, I606, and E608 each contribute to the Ca(2+) site. An EGF-like 6; calcium-binding domain is found at 605–640 (DIDECGTGRHSCTNDTICFNLDGGYDCRCPHGKNCT). Cystine bridges form between C609/C622, C616/C631, and C633/C639. A glycan (N-linked (GlcNAc...) asparagine) is linked at N618. Ca(2+)-binding residues include N624, L625, and G628. N638 carries an N-linked (GlcNAc...) asparagine glycan. In terms of domain architecture, VWFC 2 spans 701–759 (SQCLHQNGETVYNSGDTWVQDCRQCRCLQGEVDCWPLACPEVECEFSVLPENECCPRCV).

As to quaternary structure, homotrimer. Interacts with NICOL1; this interaction triggers epididymal differentiation. Interacts (via EGF domains) with ROBO3 (via FN domains); binding to ROBO3 induces repulsive guidance cue for commissural axons. In terms of tissue distribution, expressed in brain and testis but not in epididymis. Expressed in regions flanking the commissural axon trajectory, including the ventral horn.

It is found in the secreted. In terms of biological role, plays multiple roles in neural tissues, regulates neuronal proliferation, survival, differentiation, polarization, as well as axon guidance and synaptic functions. Plays an important role in axon development during neuronal differentiation through the MAPK intracellular signaling pathway. Via binding to its receptor ROBO3, plays a role in axon guidance, functioning as a repulsive axon guidance cue that contributes to commissural axon guidance to the midline. Required for neuron survival through the modulation of MAPK signaling pathways too. Involved in the regulation of hypothalamic GNRH secretion and the control of puberty. Epididymal-secreted protein that signals through a ROS1-pathway to regulate the epididymal initial segment (IS) maturation, sperm maturation and male fertility. This is Protein kinase C-binding protein NELL2 from Mus musculus (Mouse).